The following is a 348-amino-acid chain: Protein RecA (348 aa).

Position 64-71 (64-71 (GPESSGKT)) interacts with ATP. Over residues 325–335 (YEIDGSNKEPL) the composition is skewed to basic and acidic residues. The tract at residues 325–348 (YEIDGSNKEPLDEGEETLSLLDDE) is disordered. A compositionally biased stretch (acidic residues) spans 336–348 (DEGEETLSLLDDE).

The protein belongs to the RecA family.

The protein resides in the cytoplasm. Functionally, can catalyze the hydrolysis of ATP in the presence of single-stranded DNA, the ATP-dependent uptake of single-stranded DNA by duplex DNA, and the ATP-dependent hybridization of homologous single-stranded DNAs. It interacts with LexA causing its activation and leading to its autocatalytic cleavage. This chain is Protein RecA, found in Listeria monocytogenes serotype 4b (strain CLIP80459).